We begin with the raw amino-acid sequence, 285 residues long: Probable endonuclease 4 (285 aa).

Zn(2+) contacts are provided by His-69, His-109, Glu-145, Asp-179, His-182, His-216, Asp-229, His-231, and Glu-261.

This sequence belongs to the AP endonuclease 2 family. Zn(2+) serves as cofactor.

It carries out the reaction Endonucleolytic cleavage to 5'-phosphooligonucleotide end-products.. Functionally, endonuclease IV plays a role in DNA repair. It cleaves phosphodiester bonds at apurinic or apyrimidinic (AP) sites, generating a 3'-hydroxyl group and a 5'-terminal sugar phosphate. This Shigella sonnei (strain Ss046) protein is Probable endonuclease 4.